The primary structure comprises 1669 residues: Formin-like protein 12 (1669 aa).

The 189-residue stretch at 5 to 193 (RRLFYRKPPD…QYICKMDDEL (189 aa)) folds into the Phosphatase tensin-type domain. The active-site Phosphocysteine intermediate is the cysteine 126. Positions 199 to 338 (PIPFTLDCVI…FKAEVLFSEF (140 aa)) constitute a C2 tensin-type domain. Disordered regions lie at residues 688–709 (QGSS…DANE), 1025–1240 (DAGP…GHGL), and 1631–1669 (IEAD…SPFK). Positions 1036–1050 (LEWKRCPHHPPERPH) are enriched in basic and acidic residues. Pro residues-rich tracts occupy residues 1060 to 1069 (PSPPSPPPPQ), 1098 to 1127 (APPP…PPPI), 1136 to 1190 (PPAP…PPPR), and 1198 to 1230 (PPTP…PAPP). The FH2 domain maps to 1247 to 1646 (NSAATARRST…KAQKEAEKEA (400 aa)).

The protein belongs to the formin-like family. Class-II subfamily.

The protein is Formin-like protein 12 (FH12) of Oryza sativa subsp. japonica (Rice).